The sequence spans 149 residues: 3-dehydroquinate dehydratase (149 aa).

The Proton acceptor role is filled by Tyr26. Residues Asn77, His83, and Asp90 each coordinate substrate. His103 functions as the Proton donor in the catalytic mechanism. Residues 104-105 and Arg114 each bind substrate; that span reads LS.

The protein belongs to the type-II 3-dehydroquinase family. As to quaternary structure, homododecamer.

The catalysed reaction is 3-dehydroquinate = 3-dehydroshikimate + H2O. Its pathway is metabolic intermediate biosynthesis; chorismate biosynthesis; chorismate from D-erythrose 4-phosphate and phosphoenolpyruvate: step 3/7. In terms of biological role, catalyzes a trans-dehydration via an enolate intermediate. This is 3-dehydroquinate dehydratase from Haemophilus influenzae (strain 86-028NP).